The chain runs to 109 residues: Large ribosomal subunit protein uL22 (109 aa).

It belongs to the universal ribosomal protein uL22 family. As to quaternary structure, part of the 50S ribosomal subunit.

In terms of biological role, this protein binds specifically to 23S rRNA; its binding is stimulated by other ribosomal proteins, e.g. L4, L17, and L20. It is important during the early stages of 50S assembly. It makes multiple contacts with different domains of the 23S rRNA in the assembled 50S subunit and ribosome. The globular domain of the protein is located near the polypeptide exit tunnel on the outside of the subunit, while an extended beta-hairpin is found that lines the wall of the exit tunnel in the center of the 70S ribosome. The polypeptide is Large ribosomal subunit protein uL22 (Bordetella petrii (strain ATCC BAA-461 / DSM 12804 / CCUG 43448)).